A 153-amino-acid polypeptide reads, in one-letter code: Ribosomal RNA large subunit methyltransferase H (153 aa).

S-adenosyl-L-methionine-binding positions include leucine 70, glycine 102, and 121–126; that span reads FSKMTF.

The protein belongs to the RNA methyltransferase RlmH family. Homodimer.

It is found in the cytoplasm. It catalyses the reaction pseudouridine(1915) in 23S rRNA + S-adenosyl-L-methionine = N(3)-methylpseudouridine(1915) in 23S rRNA + S-adenosyl-L-homocysteine + H(+). Functionally, specifically methylates the pseudouridine at position 1915 (m3Psi1915) in 23S rRNA. The protein is Ribosomal RNA large subunit methyltransferase H of Desulfotalea psychrophila (strain LSv54 / DSM 12343).